Here is a 170-residue protein sequence, read N- to C-terminus: Co-chaperone protein HscB homolog (170 aa).

The J domain occupies 5-79 (DHFSLFGLPT…RARYLCEQAG (75 aa)).

It belongs to the HscB family. In terms of assembly, interacts with HscA and stimulates its ATPase activity.

Co-chaperone involved in the maturation of iron-sulfur cluster-containing proteins. Seems to help targeting proteins to be folded toward HscA. The sequence is that of Co-chaperone protein HscB homolog from Bordetella bronchiseptica (strain ATCC BAA-588 / NCTC 13252 / RB50) (Alcaligenes bronchisepticus).